The primary structure comprises 299 residues: tRNA dimethylallyltransferase (299 aa).

An ATP-binding site is contributed by 10–17 (GPTAVGKT). 12–17 (TAVGKT) lines the substrate pocket. The tract at residues 35–38 (DSQQ) is interaction with substrate tRNA.

It belongs to the IPP transferase family. In terms of assembly, monomer. Requires Mg(2+) as cofactor.

It carries out the reaction adenosine(37) in tRNA + dimethylallyl diphosphate = N(6)-dimethylallyladenosine(37) in tRNA + diphosphate. Its function is as follows. Catalyzes the transfer of a dimethylallyl group onto the adenine at position 37 in tRNAs that read codons beginning with uridine, leading to the formation of N6-(dimethylallyl)adenosine (i(6)A). The polypeptide is tRNA dimethylallyltransferase (Streptococcus thermophilus (strain ATCC BAA-491 / LMD-9)).